Reading from the N-terminus, the 173-residue chain is Acetyl-CoA decarbonylase/synthase complex subunit epsilon (173 aa).

This sequence belongs to the CdhB family. In terms of assembly, heterotetramer of two alpha and two epsilon subunits. The ACDS complex is made up of alpha, epsilon, beta, gamma and delta subunits with a probable stoichiometry of (alpha(2)epsilon(2))(4)-beta(8)-(gamma(1)delta(1))(8).

It participates in one-carbon metabolism; methanogenesis from acetate. In terms of biological role, part of a complex that catalyzes the reversible cleavage of acetyl-CoA, allowing growth on acetate as sole source of carbon and energy. The alpha-epsilon subcomponent functions as a carbon monoxide dehydrogenase. The precise role of the epsilon subunit is unclear; it may have a stabilizing role within the alpha(2)epsilon(2) component and/or be involved in electron transfer to FAD during a potential FAD-mediated CO oxidation. This chain is Acetyl-CoA decarbonylase/synthase complex subunit epsilon, found in Methanothermobacter thermautotrophicus (strain ATCC 29096 / DSM 1053 / JCM 10044 / NBRC 100330 / Delta H) (Methanobacterium thermoautotrophicum).